Consider the following 598-residue polypeptide: Protein unc-93 homolog B1 (598 aa).

The segment at 1 to 36 (MEVEPPLYPVAGAAGPQGDEDRHGVPDGPEAPLDEL) is disordered. The next 5 helical transmembrane spans lie at 64–84 (VLAA…LLQM), 110–130 (KMLM…PVLI), 132–152 (FFGT…FVST), 160–180 (TLVP…ASMG), and 223–243 (IFYS…IYFL). Residues asparagine 251 and asparagine 272 are each glycosylated (N-linked (GlcNAc...) asparagine). 5 helical membrane passes run 285–305 (LIVV…MVLG), 343–363 (LVPF…GFAL), 378–398 (LLIA…LGLW), 403–423 (VPLV…FFWA), and 428–448 (VLQH…GSAL). Asparagine 449 carries N-linked (GlcNAc...) asparagine glycosylation. Transmembrane regions (helical) follow at residues 469 to 489 (FIFT…YLGS) and 495 to 515 (AKLA…LWME). A disordered region spans residues 524–598 (PRQPRIPKPQ…ALGGDGPEEQ (75 aa)). Residues 544–554 (EDNSDESDMEG) are compositionally biased toward acidic residues. Residues serine 547 and serine 550 each carry the phosphoserine modification.

Belongs to the unc-93 family. In terms of assembly, interacts with TLR3, TLR5, TLR7, TLR8, TLR9 and TLR13 (probably via transmembrane domain). N-glycosylated.

It is found in the endoplasmic reticulum membrane. Its subcellular location is the endosome. The protein localises to the lysosome. It localises to the cytoplasmic vesicle. The protein resides in the phagosome. Plays an important role in innate and adaptive immunity by regulating nucleotide-sensing Toll-like receptor (TLR) signaling. Required for the transport of a subset of TLRs (including TLR3, TLR7 and TLR9) from the endoplasmic reticulum to endolysosomes where they can engage pathogen nucleotides and activate signaling cascades. May play a role in autoreactive B-cells removal. This Mus musculus (Mouse) protein is Protein unc-93 homolog B1.